The primary structure comprises 811 residues: Actin filament-associated protein 1-like 2 (811 aa).

Disordered stretches follow at residues 67-110 and 132-168; these read KEAQ…PPPK and EPYN…QQHQ. Residues 181–277 form the PH 1 domain; the sequence is DAMICAFLWR…WLKVIQDISG (97 aa). The segment at 294 to 326 is disordered; sequence QRQIHPKAEGTDRHSGASESGSSTDGHPETPEI. The span at 299 to 309 shows a compositional bias: basic and acidic residues; sequence PKAEGTDRHSG. The region spanning 359–453 is the PH 2 domain; sequence ALETSNYLNV…WLGLLLLESG (95 aa). Disordered regions lie at residues 500-532 and 558-631; these read RGQR…GEAE and LGSP…KERV. Composition is skewed to basic and acidic residues over residues 521 to 532, 566 to 577, and 622 to 631; these read DEPKSEEKGEAE, VSGKKDNEESER, and RLEKSNKERV. Positions 642-737 form a coiled coil; sequence LLGKNRTEAE…KENLRKAELG (96 aa).

In terms of assembly, interacts with src.

Its subcellular location is the cytoplasm. Functionally, may play a role in a signaling cascade by enhancing the kinase activity of src. Contributes to src-regulated transcription activation. In Xenopus laevis (African clawed frog), this protein is Actin filament-associated protein 1-like 2 (afap1l2).